The primary structure comprises 295 residues: Aquaporin-9 (295 aa).

Residues 1-24 (MQPEGAEKGKSFKQRLVLKSSLAK) lie on the Cytoplasmic side of the membrane. A helical transmembrane segment spans residues 25–43 (ETLSEFLGTFILIVLGCGC). The Extracellular segment spans residues 44–57 (VAQAILSRGRFGGV). A helical transmembrane segment spans residues 58–77 (ITINVGFSMAVAMAIYVAGG). At 78–79 (VS) the chain is on the cytoplasmic side. The discontinuously helical intramembrane region spans 80–92 (GGHINPAVSLAMC). Residues 84–86 (NPA) carry the NPA 1 motif. Residues 93 to 98 (LFGRMK) are Cytoplasmic-facing. A helical membrane pass occupies residues 99 to 123 (WFKLPFYVGAQFLGAFVGAATVFGI). The Extracellular segment spans residues 124–160 (YYDGLMSFAGGKLLIVGENATAHIFATYPAPYLSLAN). The helical transmembrane segment at 161-178 (AFADQVVATMILLIIVFA) threads the bilayer. Topologically, residues 179–190 (IFDSRNLGAPRG) are cytoplasmic. Residues 191–207 (LEPIAIGLLIIVIASSL) traverse the membrane as a helical segment. Residues 208-210 (GLN) lie on the Extracellular side of the membrane. Positions 211 to 225 (SGCAMNPARDLSPRL) form an intramembrane region, discontinuously helical. The NPA 2 signature appears at 216-218 (NPA). At 226–243 (FTALAGWGFEVFRAGNNF) the chain is on the extracellular side. Residues 244–264 (WWIPVVGPLVGAVIGGLIYVL) traverse the membrane as a helical segment. Topologically, residues 265-295 (VIEIHHPEPDSVFKTEQSEDKPEKYELSVIM) are cytoplasmic.

This sequence belongs to the MIP/aquaporin (TC 1.A.8) family. In terms of assembly, homotetramer; each monomer provides an independent glycerol/water pore. As to expression, highly expressed in peripheral leukocytes. Also expressed in liver, lung, and spleen.

It localises to the cell membrane. The protein resides in the basolateral cell membrane. It catalyses the reaction glycerol(in) = glycerol(out). The catalysed reaction is H2O(in) = H2O(out). The enzyme catalyses urea(in) = urea(out). It carries out the reaction (S)-lactate(in) = (S)-lactate(out). It catalyses the reaction NH4(+)(in) = NH4(+)(out). The catalysed reaction is uracil(in) = uracil(out). The enzyme catalyses adenine(out) = adenine(in). It carries out the reaction 3-hydroxybutanoate(in) = 3-hydroxybutanoate(out). It catalyses the reaction D-sorbitol(in) = D-sorbitol(out). The catalysed reaction is D-mannitol(in) = D-mannitol(out). The enzyme catalyses H2O2(out) = H2O2(in). It carries out the reaction arsenite(in) = arsenite(out). It catalyses the reaction selenite(in) = selenite(out). Aquaglyceroporins form homotetrameric transmembrane channels, with each monomer independently mediating glycerol and water transport across the plasma membrane along their osmotic gradient. AQP9 is the primary route for glycerol uptake in hepatocytes, supporting hepatic gluconeogenesis. It exhibits broad specificity and may transport various small, non-charged solutes, including carbamides, polyols, purines, and pyrimidines. AQP9 may also facilitate hepatic urea extrusion. Due to its permeability to lactate, AQP9 might participate in the astrocyte-to-neuron lactate shuttle, supplying neurons with energy. Additionally, AQP9 is permeable to arsenite, contributing to arsenic excretion by the liver and providing partial protection against arsenic toxicity. It is also permeable to H2O2 in vivo. Could also be permeable to ammonium. The polypeptide is Aquaporin-9 (Homo sapiens (Human)).